The primary structure comprises 629 residues: tRNA uridine 5-carboxymethylaminomethyl modification enzyme MnmG (629 aa).

13–18 (GGGHAG) lines the FAD pocket. 273–287 (GPRYCPSIEDKIMRF) is a binding site for NAD(+).

This sequence belongs to the MnmG family. Homodimer. Heterotetramer of two MnmE and two MnmG subunits. FAD is required as a cofactor.

The protein localises to the cytoplasm. Its function is as follows. NAD-binding protein involved in the addition of a carboxymethylaminomethyl (cmnm) group at the wobble position (U34) of certain tRNAs, forming tRNA-cmnm(5)s(2)U34. This is tRNA uridine 5-carboxymethylaminomethyl modification enzyme MnmG from Tolumonas auensis (strain DSM 9187 / NBRC 110442 / TA 4).